We begin with the raw amino-acid sequence, 1282 residues long: Myosin-1 (1282 aa).

The interval 1 to 30 is disordered; that stretch reads MAISKKAGAKKAGAVSKPPPSKGASSKGGV. The 680-residue stretch at 44–723 folds into the Myosin motor domain; that stretch reads AGVSDMTLLS…TLFALETMRD (680 aa). ATP is bound at residue 137–144; the sequence is GESGAGKT. At Ser-365 the chain carries Phosphoserine. An actin-binding region spans residues 412–494; sequence VIGVLDIYGF…PGIFSALNDA (83 aa). The tract at residues 569–590 is disordered; that stretch reads LQKLFPDRPDPNSKKRPPTAGD. IQ domains lie at 727 to 747 and 748 to 773; these read HNMA…KEEC and ARRI…YGHQ. A TH1 domain is found at 781 to 977; that stretch reads RRRFSLLGLR…AVSVCSGEPA (197 aa). The tract at residues 973–1073 is disordered; sequence SGEPANSVSR…PPPAAVAPSE (101 aa). Low complexity predominate over residues 1029–1058; it reads PGSGAAGTARPAAAVGSASAGAGVGATRSA. The segment covering 1059–1068 has biased composition (pro residues); sequence PRPPPPPPAA. In terms of domain architecture, SH3 spans 1074–1135; the sequence is PQVARYKALY…PSNYLELIVQ (62 aa). Residues 1237 to 1282 are disordered; the sequence is AAAAAAGAGANGKGAGAPPAVAAKPVVAPKPAGSNGRAMPPPPPRR. Residues 1252–1269 are compositionally biased toward low complexity; that stretch reads GAPPAVAAKPVVAPKPAG.

The protein belongs to the TRAFAC class myosin-kinesin ATPase superfamily. Myosin family. Phosphorylation of the TEDS site (Ser-365) is required for the polarization of the actin cytoskeleton. Phosphorylation probably activates the myosin-I ATPase activity.

The protein resides in the cytoplasm. It localises to the cytoskeleton. Its subcellular location is the actin patch. In terms of biological role, type-I myosin implicated in the organization of the actin cytoskeleton. Required for proper actin cytoskeleton polarization. At the cell cortex, assembles in patch-like structures together with proteins from the actin-polymerizing machinery and promotes actin assembly. Functions as actin nucleation-promoting factor (NPF) for the Arp2/3 complex. This Mycosarcoma maydis (Corn smut fungus) protein is Myosin-1 (myo1).